The primary structure comprises 1366 residues: Protein HUA2-LIKE 2 (1366 aa).

The PWWP domain occupies 24–81 (VGDLVLAKVKGFPAWPAVVSEPEKWDASPDSKKVFVHFFGTQQIAFCNPGDVEAFTEE). Positions 111 to 124 (LKQQERASDPKSAE) are enriched in basic and acidic residues. Disordered regions lie at residues 111-138 (LKQQ…TLMP), 203-319 (TYSS…SGSK), 384-403 (NVQT…CEEN), 427-451 (EANS…AQTS), and 787-808 (SESA…TGEK). Residues 213–252 (VRSQNCAPQNETCPVQRSKSPSRLQTEKLQSSMLQNSDGG) show a composition bias toward polar residues. Residues 391 to 403 (SHEKFTERPCEEN) show a composition bias toward basic and acidic residues. A compositionally biased stretch (polar residues) spans 787–803 (SESANDMQNNSSGSPNI). The CID domain maps to 836-977 (DVQSTRESYE…HHIRELDSHS (142 aa)). Disordered stretches follow at residues 1027–1076 (LKDE…TAER) and 1128–1366 (TSHQ…QRSD). Positions 1032–1052 (GGSDSEGGCDSEGGSDSDGGD) are enriched in acidic residues. The segment covering 1057 to 1066 (TPEHESRILE) has biased composition (basic and acidic residues). Residues 1138-1152 (PPLPSSSPPPPPAPP) are compositionally biased toward pro residues. A compositionally biased stretch (polar residues) spans 1191–1223 (LSGSTMHYQGPESSYISGVQLTNSIPQADGSNF). A compositionally biased stretch (pro residues) spans 1229–1244 (PSHPHPHPPPPPPPPQ). Composition is skewed to basic and acidic residues over residues 1251 to 1262 (EPGHVLKSHRDA) and 1275 to 1298 (CDER…RDNW). Residues 1299 to 1309 (RYPPSSSYGSR) show a composition bias toward low complexity.

As to expression, expressed throughout young primordia, and vegetative and reproductive apices.

The protein localises to the nucleus. Functionally, probable transcription factor that acts with partial redundancy with HULK1 and HULK3. Plays diverse and essential roles in the control of plant development, physiology and flowering time. In Arabidopsis thaliana (Mouse-ear cress), this protein is Protein HUA2-LIKE 2.